A 724-amino-acid polypeptide reads, in one-letter code: Catalase-peroxidase (724 aa).

A cross-link (tryptophyl-tyrosyl-methioninium (Trp-Tyr) (with M-252)) is located at residues 98–226 (WHAAGSYRTA…LAAVQMGLIY (129 aa)). H99 acts as the Proton acceptor in catalysis. Residues 226–252 (YVNPQGVNGEPDPLRTALHVRETFARM) constitute a cross-link (tryptophyl-tyrosyl-methioninium (Tyr-Met) (with W-98)). Heme b is bound at residue H267.

Belongs to the peroxidase family. Peroxidase/catalase subfamily. Homodimer or homotetramer. It depends on heme b as a cofactor. Formation of the three residue Trp-Tyr-Met cross-link is important for the catalase, but not the peroxidase activity of the enzyme.

It carries out the reaction H2O2 + AH2 = A + 2 H2O. It catalyses the reaction 2 H2O2 = O2 + 2 H2O. Bifunctional enzyme with both catalase and broad-spectrum peroxidase activity. This is Catalase-peroxidase from Cereibacter sphaeroides (strain ATCC 17025 / ATH 2.4.3) (Rhodobacter sphaeroides).